The chain runs to 253 residues: Major prion protein (253 aa).

An N-terminal signal peptide occupies residues 1–22 (MANLGCWMLVLFVATWSDLGLC). Residues 23–38 (KKRPKPGGWNTGGSRY) are interaction with ADGRG6. The segment at 23-230 (KKRPKPGGWN…ESQAYYQRGS (208 aa)) is interaction with GRB2, ERI3 and SYN1. The interval 26-108 (PKPGGWNTGG…WNKPSKPKTN (83 aa)) is disordered. Tandem repeats lie at residues 51-59 (PQGGGGWGQ), 60-67 (PHGGGWGQ), 68-75 (PHGGGWGQ), 76-83 (PHGGGWGQ), and 84-91 (PHGGGWGQ). Residues 51–91 (PQGGGGWGQPHGGGWGQPHGGGWGQPHGGGWGQPHGGGWGQ) form a 5 X 8 AA tandem repeats of P-H-G-G-G-W-G-Q region. The span at 52 to 95 (QGGGGWGQPHGGGWGQPHGGGWGQPHGGGWGQPHGGGWGQGGGT) shows a compositional bias: gly residues. 12 residues coordinate Cu(2+): H61, G62, G63, H69, G70, G71, H77, G78, G79, H85, G86, and G87. A disulfide bridge links C179 with C214. Residues N181 and N197 are each glycosylated (N-linked (GlcNAc...) asparagine). A lipid anchor (GPI-anchor amidated serine) is attached at S230. The propeptide at 231–253 (SMVLFSSPPVILLISFLIFLIVG) is removed in mature form.

It belongs to the prion family. As to quaternary structure, monomer and homodimer. Has a tendency to aggregate into amyloid fibrils containing a cross-beta spine, formed by a steric zipper of superposed beta-strands. Soluble oligomers may represent an intermediate stage on the path to fibril formation. Copper binding may promote oligomerization. Interacts with GRB2, APP, ERI3/PRNPIP and SYN1. Mislocalized cytosolically exposed PrP interacts with MGRN1; this interaction alters MGRN1 subcellular location and causes lysosomal enlargement. Interacts with KIAA1191. Interacts with ADGRG6. The glycosylation pattern (the amount of mono-, di- and non-glycosylated forms or glycoforms) seems to differ in normal and CJD prion.

It localises to the cell membrane. The protein resides in the golgi apparatus. In terms of biological role, its primary physiological function is unclear. May play a role in neuronal development and synaptic plasticity. May be required for neuronal myelin sheath maintenance. May promote myelin homeostasis through acting as an agonist for ADGRG6 receptor. May play a role in iron uptake and iron homeostasis. Soluble oligomers are toxic to cultured neuroblastoma cells and induce apoptosis (in vitro). Association with GPC1 (via its heparan sulfate chains) targets PRNP to lipid rafts. Also provides Cu(2+) or Zn(2+) for the ascorbate-mediated GPC1 deaminase degradation of its heparan sulfate side chains. The protein is Major prion protein (PRNP) of Homo sapiens (Human).